The following is a 901-amino-acid chain: Core protein VP3 (901 aa).

Belongs to the orbivirus VP3 family.

The protein resides in the virion. In terms of biological role, the VP3 protein is one of the five proteins (with VP1, VP4, VP6 and VP7) which form the inner capsid of the virus. This chain is Core protein VP3 (Segment-3), found in Bluetongue virus 1 (isolate South Africa) (BTV 1).